The chain runs to 324 residues: mRNA decay activator protein ZFP36 (324 aa).

Positions 1–15 (MDLAAIYKSLLSLSP) are necessary for nuclear export. The necessary and sufficient for the association with mRNA decay enzymes and mRNA decay activation stretch occupies residues 1 to 98 (MDLAAIYKSL…PTSPTATPTT (98 aa)). Necessary for localization of ARE-containing mRNAs to processing bodies (PBs) regions lie at residues 1 to 172 (MDLA…DLAA) and 98 to 324 (TSSR…SVSE). Over residues 15–46 (PELPSDLGETESSTSWASSGPWSLSSSDSSLP) the composition is skewed to low complexity. The interval 15-50 (PELPSDLGETESSTSWASSGPWSLSSSDSSLPEVAA) is disordered. A Phosphoserine; by MAPKAPK2 modification is found at Ser58. Ser64 is modified (phosphoserine). The stretch at 69–73 (PPPPG) is one P-P-P-P-G repeat. The disordered stretch occupies residues 76–100 (PLAPRPSSDWSPSPTSPTATPTTSS). Ser86 and Ser88 each carry phosphoserine. Thr90 carries the post-translational modification Phosphothreonine. Ser91 is subject to Phosphoserine. The interval 93-166 (TATPTTSSRY…GSRCHFIHNP (74 aa)) is necessary for nuclear localization. The segment at 95–171 (TPTTSSRYKT…FIHNPSEDLA (77 aa)) is necessary for RNA-binding. C3H1-type zinc fingers lie at residues 101-129 (RYKT…HGLG) and 139-167 (KYKT…HNPS). The segment at 101–192 (RYKTELCRTF…ISFSGLPSGR (92 aa)) is necessary for interaction with PABPN1. Ser167 is subject to Phosphoserine. Positions 172–324 (APGHPHVLRQ…PIFNRISVSE (153 aa)) are necessary for mRNA decay activation. Position 184 is a phosphoserine; by MAPKAPK2 (Ser184). 2 disordered regions span residues 185–227 (FSGL…LLLS) and 270–324 (PSAH…SVSE). Position 195 is a phosphoserine (Ser195). Residues 196-200 (PPPAS) form a P-P-P-P-G repeat. The span at 204–214 (PSVSSWSFSPS) shows a compositional bias: low complexity. Residue Ser216 is modified to Phosphoserine. The P-P-P-P-G repeat unit spans residues 218–222 (PPPPG). Ser227 is modified (phosphoserine; by MAPK1; in vitro). Residues Ser274, Ser294, and Ser321 each carry the phosphoserine modification. The interaction with CNOT1 stretch occupies residues 310–324 (APRRLPIFNRISVSE).

Associates with cytoplasmic CCR4-NOT and PAN2-PAN3 deadenylase complexes to trigger ARE-containing mRNA deadenylation and decay processes. Part of a mRNA decay activation complex at least composed of poly(A)-specific exoribonucleases CNOT6, EXOSC2 and XRN1 and mRNA-decapping enzymes DCP1A and DCP2. Associates with the RNA exosome complex. Interacts (via phosphorylated form) with 14-3-3 proteins; these interactions promote exclusion of ZFP36 from cytoplasmic stress granules in response to arsenite treatment in a MAPKAPK2-dependent manner and does not prevent CCR4-NOT deadenylase complex recruitment or ZFP36-induced ARE-containing mRNA deadenylation and decay processes. Interacts with 14-3-3 proteins; these interactions occur in response to rapamycin in an Akt-dependent manner. Interacts with AGO2 and AGO4. Interacts (via C-terminus) with CNOT1; this interaction occurs in a RNA-independent manner and induces mRNA deadenylation. Interacts (via N-terminus) with CNOT6. Interacts with CNOT6L. Interacts (via C-terminus) with CNOT7; this interaction occurs in a RNA-independent manner, induces mRNA deadenylation and is inhibited in a phosphorylation MAPKAPK2-dependent manner. Interacts (via unphosphorylated form) with CNOT8; this interaction occurs in a RNA-independent manner and is inhibited in a phosphorylation MAPKAPK2-dependent manner. Interacts with DCP1A. Interacts (via N-terminus) with DCP2. Interacts with EDC3. Interacts (via N-terminus) with EXOSC2. Interacts with heat shock 70 kDa proteins. Interacts with KHSRP; this interaction increases upon cytokine-induced treatment. Interacts with MAP3K4; this interaction enhances the association with SH3KBP1/CIN85. Interacts with MAPKAPK2; this interaction occurs upon skeletal muscle satellite cell activation. Interacts with NCL. Interacts with NUP214; this interaction increases upon lipopolysaccharide (LPS) stimulation. Interacts with PABPC1; this interaction occurs in a RNA-dependent manner. Interacts (via hypophosphorylated form) with PABPN1 (via RRM domain and C-terminal arginine-rich region); this interaction occurs in the nucleus in a RNA-independent manner, decreases in presence of single-stranded poly(A) RNA-oligomer and in a p38 MAPK-dependent-manner and inhibits nuclear poly(A) tail synthesis. Interacts with PAN2. Interacts (via C3H1-type zinc finger domains) with PKM. Interacts (via C3H1-type zinc finger domains) with nuclear RNA poly(A) polymerase. Interacts with PPP2CA; this interaction occurs in LPS-stimulated cells and induces ZFP36 dephosphorylation, and hence may promote ARE-containing mRNAs decay. Interacts (via C-terminus) with PRR5L (via C-terminus); this interaction may accelerate ZFP36-mediated mRNA decay during stress. Interacts (via C-terminus) with SFN; this interaction occurs in a phosphorylation-dependent manner. Interacts (via extreme C-terminal region) with SH3KBP1/CIN85 (via SH3 domains); this interaction enhances MAP3K4-induced phosphorylation of ZFP36 at Ser-64 and Ser-91 and does not alter neither ZFP36 binding to ARE-containing transcripts nor TNF-alpha mRNA decay. Interacts with XRN1. Interacts (via C-terminus and Ser-184 phosphorylated form) with YWHAB; this interaction occurs in a p38/MAPKAPK2-dependent manner, increases cytoplasmic localization of ZFP36 and protects ZFP36 from Ser-184 dephosphorylation by serine/threonine phosphatase 2A, and hence may be crucial for stabilizing ARE-containing mRNAs. Interacts (via phosphorylated form) with YWHAE. Interacts (via C-terminus) with YWHAG; this interaction occurs in a phosphorylation-dependent manner. Interacts with YWHAH; this interaction occurs in a phosphorylation-dependent manner. Interacts with YWHAQ; this interaction occurs in a phosphorylation-dependent manner. Interacts with (via C-terminus) YWHAZ; this interaction occurs in a phosphorylation-dependent manner. Does not interact with SH3KBP1. Interacts (via P-P-P-P-G repeats) with GIGYF2; the interaction is direct. Post-translationally, phosphorylated. Phosphorylation at serine and/or threonine residues occurs in a p38 MAPK- and MAPKAPK2-dependent manner. Phosphorylated by MAPKAPK2 at Ser-58 and Ser-184; phosphorylation increases its stability and cytoplasmic localization, promotes binding to 14-3-3 adapter proteins and inhibits the recruitment of cytoplasmic CCR4-NOT and PAN2-PAN3 deadenylase complexes to the mRNA decay machinery, thereby inhibiting ZFP36-induced ARE-containing mRNA deadenylation and decay processes. Phosphorylation by MAPKAPK2 does not impair ARE-containing RNA-binding. Phosphorylated in a MAPKAPK2- and p38 MAPK-dependent manner upon skeletal muscle satellite cell activation; this phosphorylation inhibits ZFP36-mediated mRNA decay activity, and hence stabilizes MYOD1 mRNA. Phosphorylated by MAPK1 upon mitogen stimulation. Phosphorylated at Ser-64 and Ser-91; these phosphorylations increase in a SH3KBP1-dependent manner. Phosphorylated at serine and threonine residues in a pyruvate kinase PKM- and p38 MAPK-dependent manner. Phosphorylation at Ser-58 may participate in the PKM-mediated degradation of ZFP36 in a p38 MAPK-dependent manner. Dephosphorylated by serine/threonine phosphatase 2A at Ser-184. Ubiquitinated; pyruvate kinase (PKM)-dependent ubiquitination leads to proteasomal degradation through a p38 MAPK signaling pathway.

Its subcellular location is the nucleus. The protein resides in the cytoplasm. It is found in the cytoplasmic granule. The protein localises to the P-body. Its function is as follows. Zinc-finger RNA-binding protein that destabilizes numerous cytoplasmic AU-rich element (ARE)-containing mRNA transcripts by promoting their poly(A) tail removal or deadenylation, and hence provide a mechanism for attenuating protein synthesis. Acts as an 3'-untranslated region (UTR) ARE mRNA-binding adapter protein to communicate signaling events to the mRNA decay machinery. Recruits deadenylase CNOT7 (and probably the CCR4-NOT complex) via association with CNOT1, and hence promotes ARE-mediated mRNA deadenylation. Also functions by recruiting components of the cytoplasmic RNA decay machinery to the bound ARE-containing mRNAs. Self regulates by destabilizing its own mRNA. Binds to 3'-UTR ARE of numerous mRNAs. Also binds to ARE of its own mRNA. Plays a role in anti-inflammatory responses; suppresses tumor necrosis factor (TNF)-alpha production by stimulating ARE-mediated TNF-alpha mRNA decay and several other inflammatory ARE-containing mRNAs in interferon (IFN)- and/or lipopolysaccharide (LPS)-induced macrophages. Also plays a role in the regulation of dendritic cell maturation at the post-transcriptional level, and hence operates as part of a negative feedback loop to limit the inflammatory response. Promotes ARE-mediated mRNA decay of hypoxia-inducible factor HIF1A mRNA during the response of endothelial cells to hypoxia. Positively regulates early adipogenesis of preadipocytes by promoting ARE-mediated mRNA decay of immediate early genes (IEGs). Negatively regulates hematopoietic/erythroid cell differentiation by promoting ARE-mediated mRNA decay of the transcription factor STAT5B mRNA. Plays a role in maintaining skeletal muscle satellite cell quiescence by promoting ARE-mediated mRNA decay of the myogenic determination factor MYOD1 mRNA. Also associates with and regulates the expression of non-ARE-containing target mRNAs at the post-transcriptional level, such as MHC class I mRNAs. Participates in association with argonaute RISC catalytic components in the ARE-mediated mRNA decay mechanism; assists microRNA (miRNA) targeting ARE-containing mRNAs. May also play a role in the regulation of cytoplasmic mRNA decapping; enhances decapping of ARE-containing RNAs, in vitro. Involved in the delivery of target ARE-mRNAs to processing bodies (PBs). In addition to its cytosolic mRNA-decay function, affects nuclear pre-mRNA processing. Negatively regulates nuclear poly(A)-binding protein PABPN1-stimulated polyadenylation activity on ARE-containing pre-mRNA during LPS-stimulated macrophages. Also involved in the regulation of stress granule (SG) and P-body (PB) formation and fusion. Plays a role in the regulation of keratinocyte proliferation, differentiation and apoptosis. Plays a role as a tumor suppressor by inhibiting cell proliferation in breast cancer cells. The sequence is that of mRNA decay activator protein ZFP36 from Bos taurus (Bovine).